The sequence spans 508 residues: Photosystem II CP47 reaction center protein (508 aa).

The next 6 helical transmembrane spans lie at serine 21–serine 36, isoleucine 101–tryptophan 115, glycine 140–phenylalanine 156, isoleucine 203–serine 218, valine 237–valine 252, and serine 457–arginine 472.

The protein belongs to the PsbB/PsbC family. PsbB subfamily. PSII is composed of 1 copy each of membrane proteins PsbA, PsbB, PsbC, PsbD, PsbE, PsbF, PsbH, PsbI, PsbJ, PsbK, PsbL, PsbM, PsbT, PsbX, PsbY, PsbZ, Psb30/Ycf12, at least 3 peripheral proteins of the oxygen-evolving complex and a large number of cofactors. It forms dimeric complexes. Requires Binds multiple chlorophylls. PSII binds additional chlorophylls, carotenoids and specific lipids. as cofactor.

It localises to the plastid. Its subcellular location is the chloroplast thylakoid membrane. Functionally, one of the components of the core complex of photosystem II (PSII). It binds chlorophyll and helps catalyze the primary light-induced photochemical processes of PSII. PSII is a light-driven water:plastoquinone oxidoreductase, using light energy to abstract electrons from H(2)O, generating O(2) and a proton gradient subsequently used for ATP formation. The protein is Photosystem II CP47 reaction center protein of Panax ginseng (Korean ginseng).